The chain runs to 464 residues: Phospho-cellobiase (464 aa).

Catalysis depends on Glu172, which acts as the Proton donor. Glu361 functions as the Nucleophile in the catalytic mechanism.

It belongs to the glycosyl hydrolase 1 family.

The chain is Phospho-cellobiase (casB) from Klebsiella oxytoca.